A 414-amino-acid polypeptide reads, in one-letter code: Probable cytochrome P450 127A1 (414 aa).

Cys364 is a binding site for heme.

The protein belongs to the cytochrome P450 family. Heme is required as a cofactor.

In terms of biological role, cytochromes P450 are a group of heme-thiolate monooxygenases. They oxidize a variety of structurally unrelated compounds, including steroids, fatty acids, and xenobiotics. The protein is Probable cytochrome P450 127A1 (cyp127A1) of Sinorhizobium fredii (strain NBRC 101917 / NGR234).